The sequence spans 335 residues: Glycerol-3-phosphate dehydrogenase [NAD(P)+] (335 aa).

3 residues coordinate NADPH: Trp-14, Arg-33, and Lys-111. Residues Lys-111, Gly-140, and Ser-142 each contribute to the sn-glycerol 3-phosphate site. Ala-144 provides a ligand contact to NADPH. Sn-glycerol 3-phosphate is bound by residues Lys-195, Asp-248, Ser-258, Arg-259, and Asn-260. Lys-195 acts as the Proton acceptor in catalysis. Position 259 (Arg-259) interacts with NADPH. Residues Val-283 and Glu-285 each coordinate NADPH.

This sequence belongs to the NAD-dependent glycerol-3-phosphate dehydrogenase family.

It is found in the cytoplasm. The enzyme catalyses sn-glycerol 3-phosphate + NAD(+) = dihydroxyacetone phosphate + NADH + H(+). The catalysed reaction is sn-glycerol 3-phosphate + NADP(+) = dihydroxyacetone phosphate + NADPH + H(+). The protein operates within membrane lipid metabolism; glycerophospholipid metabolism. Its function is as follows. Catalyzes the reduction of the glycolytic intermediate dihydroxyacetone phosphate (DHAP) to sn-glycerol 3-phosphate (G3P), the key precursor for phospholipid synthesis. The sequence is that of Glycerol-3-phosphate dehydrogenase [NAD(P)+] from Burkholderia mallei (strain NCTC 10247).